The primary structure comprises 441 residues: Insulinoma-associated protein 1 (441 aa).

A compositionally biased stretch (basic residues) spans M1–K12. Residues M1 to V20 form an SNAG domain region. Disordered stretches follow at residues M1–L31, T43–R189, L205–P224, and R278–L316. Residues R19–G28 show a composition bias toward basic and acidic residues. Residues N74–Y83 show a composition bias toward polar residues. The span at V89 to Y98 shows a compositional bias: basic and acidic residues. 2 stretches are compositionally biased toward low complexity: residues V138–S147 and G169–P180. The C2H2-type 1 zinc-finger motif lies at Y258 to H280. A compositionally biased stretch (basic and acidic residues) spans A292–T302. 3 consecutive C2H2-type zinc fingers follow at residues Y317 to H339, H372 to H395, and Y400 to H423.

It belongs to the INSM1 family.

The protein resides in the nucleus. Functionally, may act as a transcriptional regulator. Plays a role in noradrenergic neuron, pancreatic and gastrointestinal endocrine cells differentiation during embryonic development. The protein is Insulinoma-associated protein 1 (insm1) of Xenopus tropicalis (Western clawed frog).